The following is a 776-amino-acid chain: 1,4-alpha-glucan branching enzyme GlgB (776 aa).

Asp431 serves as the catalytic Nucleophile. Glu484 (proton donor) is an active-site residue.

Belongs to the glycosyl hydrolase 13 family. GlgB subfamily. As to quaternary structure, monomer.

It catalyses the reaction Transfers a segment of a (1-&gt;4)-alpha-D-glucan chain to a primary hydroxy group in a similar glucan chain.. Its pathway is glycan biosynthesis; glycogen biosynthesis. Functionally, catalyzes the formation of the alpha-1,6-glucosidic linkages in glycogen by scission of a 1,4-alpha-linked oligosaccharide from growing alpha-1,4-glucan chains and the subsequent attachment of the oligosaccharide to the alpha-1,6 position. The chain is 1,4-alpha-glucan branching enzyme GlgB from Trichodesmium erythraeum (strain IMS101).